The sequence spans 434 residues: Forkhead box protein A2-A (434 aa).

A DNA-binding region (fork-head) is located at residues 149-243 (KPPYSYISLI…ENGCYLRRQK (95 aa)). Residues 249–262 (KKPSLREGGGKKLS) show a composition bias toward basic and acidic residues. Disordered regions lie at residues 249-339 (KKPS…QSHL) and 408-434 (SGLE…MNSS). Composition is skewed to low complexity over residues 263–291 (EGAS…SSSP) and 317–333 (ASQA…VLSH). The span at 408–422 (SGLESSPITSDTSYY) shows a compositional bias: polar residues.

At gastrula stage, expressed in both the anterior and posterior endoderm, with endodermal expression persisting into early tailbud stages. Expression is absent in gastrula stage ectoderm. During tailbud stages, expressed in the pharyngeal region, the neural floor plate, the midbrain, hindbrain and in cranial neural crest cells. Expressed in the foregut of hatching larvae. In tadpoles, expressed in the pharyngeal pouches and in other anterior endodermal regions. Within the tadpole nervous system, expressed in the neural floor plate, at high levels in the ventral midbrain and hindbrain, and at lower levels in the spinal cord. Expressed in the adult lung and brain.

Its subcellular location is the nucleus. Acts as a transcriptional activator during early development, limiting the extent of mesoderm formation in the gastrula. Binds to DNA via the target sequence 5'-GT[AC]AACA-3', with 5'-GTAAACA-3' being the preferred binding site. The chain is Forkhead box protein A2-A (foxa2-a) from Xenopus laevis (African clawed frog).